Consider the following 652-residue polypeptide: Vacuolar fusion protein MON1 homolog A (652 aa).

The interval 102–141 (MQRKRSSECLDGTLTPSDGQSMERAESPTPGMAQGMEPGA) is disordered. Ser128 and Ser153 each carry phosphoserine. Residue Thr158 is modified to Phosphothreonine. The interval 158 to 185 (TESEDGAASGDSHKEGTRGPPPLPTDMR) is disordered. A Phosphoserine modification is found at Ser188. The disordered stretch occupies residues 211 to 245 (PGSSEDWLEPPGAVGRPATEPPREGTTEGDEEDAT).

The protein belongs to the MON1/SAND family. In terms of assembly, interacts with CCZ1. Found in a complex with RMC1, CCZ1, MON1A and MON1B. The MON1A-CCZ1B complex interacts with RIMOC1. The MON1A-CCZ1B complex interacts with RAB7A and this interaction is enhanced in the presence of RIMOC1.

Its function is as follows. Plays an important role in membrane trafficking through the secretory apparatus. Not involved in endocytic trafficking to lysosomes. Acts in concert with CCZ1, as a guanine exchange factor (GEF) for RAB7, promotes the exchange of GDP to GTP, converting it from an inactive GDP-bound form into an active GTP-bound form. This is Vacuolar fusion protein MON1 homolog A (MON1A) from Homo sapiens (Human).